Reading from the N-terminus, the 168-residue chain is ATP synthase subunit b (168 aa).

Residues 11 to 31 (EISIINTLWYLIVFSILLLAV) traverse the membrane as a helical segment.

Belongs to the ATPase B chain family. In terms of assembly, F-type ATPases have 2 components, F(1) - the catalytic core - and F(0) - the membrane proton channel. F(1) has five subunits: alpha(3), beta(3), gamma(1), delta(1), epsilon(1). F(0) has three main subunits: a(1), b(2) and c(10-14). The alpha and beta chains form an alternating ring which encloses part of the gamma chain. F(1) is attached to F(0) by a central stalk formed by the gamma and epsilon chains, while a peripheral stalk is formed by the delta and b chains.

The protein localises to the cell membrane. F(1)F(0) ATP synthase produces ATP from ADP in the presence of a proton or sodium gradient. F-type ATPases consist of two structural domains, F(1) containing the extramembraneous catalytic core and F(0) containing the membrane proton channel, linked together by a central stalk and a peripheral stalk. During catalysis, ATP synthesis in the catalytic domain of F(1) is coupled via a rotary mechanism of the central stalk subunits to proton translocation. In terms of biological role, component of the F(0) channel, it forms part of the peripheral stalk, linking F(1) to F(0). The protein is ATP synthase subunit b of Lactobacillus delbrueckii subsp. bulgaricus (strain ATCC 11842 / DSM 20081 / BCRC 10696 / JCM 1002 / NBRC 13953 / NCIMB 11778 / NCTC 12712 / WDCM 00102 / Lb 14).